The chain runs to 332 residues: MATLKDQLIYNLLKEEQTPQNKITVVGVGAVGMACAISILMKDLADELALVDVIEDKLKGEMMDLQHGSLFLRTPKIVSGKDYNVTANSKLVIITAGARQQEGESRLNLVQRNVNIFKFIIPNVVKYSPNCKLLIVSNPVDILTYVAWKISGFPKNRVIGSGCNLDSARFRYLMGERLGVHPLSCHGWVLGEHGDSSVPVWSGMNVAGVSLKTLHPDLGTDKDKEQWKEVHKQVVESAYEVIKLKGYTSWAIGLSVADLAESIMKNLRRVHPVSTMIKGLYGIKDDVFLSVPCILGQNGISDLVKVTLTSEEEARLKKSADTLWGIQKELQF.

Residue A2 is modified to N-acetylalanine. K5 carries the post-translational modification N6-acetyllysine; alternate. K5 is subject to N6-succinyllysine; alternate. Y10 is modified (phosphotyrosine). K14 carries the post-translational modification N6-acetyllysine. T18 is subject to Phosphothreonine. 29–57 is a binding site for NAD(+); the sequence is GAVGMACAISILMKDLADELALVDVIEDK. K57 bears the N6-acetyllysine; alternate mark. K57 is covalently cross-linked (Glycyl lysine isopeptide (Lys-Gly) (interchain with G-Cter in SUMO2); alternate). K81 carries the post-translational modification N6-acetyllysine. R99 contributes to the NAD(+) binding site. R106 is a substrate binding site. The residue at position 118 (K118) is an N6-acetyllysine; alternate. K118 bears the N6-succinyllysine; alternate mark. Residue K126 is modified to N6-acetyllysine. N138 is an NAD(+) binding site. Substrate is bound by residues N138 and R169. H193 functions as the Proton acceptor in the catalytic mechanism. K224 and K232 each carry N6-acetyllysine. Phosphotyrosine is present on Y239. The residue at position 243 (K243) is an N6-acetyllysine. Position 248 (T248) interacts with substrate. Residue T309 is modified to Phosphothreonine. The residue at position 310 (S310) is a Phosphoserine. An N6-acetyllysine; alternate modification is found at K318. K318 carries the N6-succinyllysine; alternate modification. At T322 the chain carries Phosphothreonine.

This sequence belongs to the LDH/MDH superfamily. LDH family. Homotetramer. Interacts with PTEN upstream reading frame protein MP31. Interacts with folliculin FLCN; the interaction is direct and inhibits enzymatic activity. In terms of processing, ISGylated. In terms of tissue distribution, predominantly expressed in anaerobic tissues such as skeletal muscle and liver.

The protein localises to the cytoplasm. The enzyme catalyses (S)-lactate + NAD(+) = pyruvate + NADH + H(+). The protein operates within fermentation; pyruvate fermentation to lactate; (S)-lactate from pyruvate: step 1/1. With respect to regulation, fermentation of pyruvate to lactate is inhibited when bound to folliculin FLCN, perhaps partly by FLCN preventing binding of cofactor NADH. Interconverts simultaneously and stereospecifically pyruvate and lactate with concomitant interconversion of NADH and NAD(+). This Homo sapiens (Human) protein is L-lactate dehydrogenase A chain.